The sequence spans 253 residues: 5'-nucleotidase SurE (253 aa).

The a divalent metal cation site is built by D8, D9, S39, and N92.

Belongs to the SurE nucleotidase family. A divalent metal cation serves as cofactor.

It localises to the cytoplasm. It carries out the reaction a ribonucleoside 5'-phosphate + H2O = a ribonucleoside + phosphate. In terms of biological role, nucleotidase that shows phosphatase activity on nucleoside 5'-monophosphates. This Burkholderia mallei (strain NCTC 10247) protein is 5'-nucleotidase SurE.